A 446-amino-acid chain; its full sequence is WD repeat domain phosphoinositide-interacting protein 1 (446 aa).

Positions 131 to 136 (LLKTVL) match the Nuclear receptor interaction motif. Residues 184–224 (AHEGTLAAITFNSSGSKLASASEKGTVIRVFSVPEGQKLYE) form a WD 1 repeat. Residues 225 to 228 (FRRG) carry the L/FRRG motif motif. WD repeat units lie at residues 230-269 (KRYV…DSRP) and 312-351 (SGQK…GGEC). The interval 386–406 (ARPSTSAASTVPGYSEDGGAL) is disordered.

Belongs to the WD repeat PROPPIN family. As to quaternary structure, interacts with androgen receptor (AR) and the estrogen receptors ESR1 and ESR2. Interacts with WIPI2. Interacts with WDR45. Interacts with ATG16L1. May interact with NUDC.

The protein localises to the golgi apparatus. Its subcellular location is the trans-Golgi network. It localises to the endosome. It is found in the cytoplasmic vesicle. The protein resides in the clathrin-coated vesicle. The protein localises to the preautophagosomal structure membrane. Its subcellular location is the cytoplasm. It localises to the cytoskeleton. Its function is as follows. Component of the autophagy machinery that controls the major intracellular degradation process by which cytoplasmic materials are packaged into autophagosomes and delivered to lysosomes for degradation. Plays an important role in starvation- and calcium-mediated autophagy, as well as in mitophagy. Functions downstream of the ULK1 and PI3-kinases that produce phosphatidylinositol 3-phosphate (PtdIns3P) on membranes of the endoplasmic reticulum once activated. Binds phosphatidylinositol 3-phosphate (PtdIns3P), and maybe other phosphoinositides including PtdIns3,5P2 and PtdIns5P, and is recruited to phagophore assembly sites at the endoplasmic reticulum membranes. There, it assists WIPI2 in the recruitment of ATG12-ATG5-ATG16L1, a complex that directly controls the elongation of the nascent autophagosomal membrane. Together with WDR45/WIPI4, promotes ATG2 (ATG2A or ATG2B)-mediated lipid transfer by enhancing ATG2-association with phosphatidylinositol 3-monophosphate (PI3P)-containing membranes. Involved in xenophagy of Staphylococcus aureus. Invading S.aureus cells become entrapped in autophagosome-like WIPI1 positive vesicles targeted for lysosomal degradation. Also plays a distinct role in controlling the transcription of melanogenic enzymes and melanosome maturation, a process that is distinct from starvation-induced autophagy. May also regulate the trafficking of proteins involved in the mannose-6-phosphate receptor (MPR) recycling pathway. The sequence is that of WD repeat domain phosphoinositide-interacting protein 1 (Wipi1) from Mus musculus (Mouse).